The primary structure comprises 239 residues: Homeobox-leucine zipper protein HOX12 (239 aa).

Residues 22-65 form a disordered region; the sequence is PEAATSGGEQKKARQRRRRKVKPEAAAALAGESGGDEQAKKRRL. A DNA-binding region (homeobox) is located at residues 58-117; that stretch reads EQAKKRRLSDEQARFLEMSFKKERKLETPRKVQLAAELGLDAKQVAVWFQNRRARHKSKL. A coiled-coil region spans residues 107 to 168; the sequence is QNRRARHKSK…KLAAVAAATT (62 aa).

The protein belongs to the HD-ZIP homeobox family. Class I subfamily. In terms of tissue distribution, expressed in seedlings, roots, stems, leaf sheaths and panicles.

The protein resides in the nucleus. In terms of biological role, probable transcription factor. The chain is Homeobox-leucine zipper protein HOX12 (HOX12) from Oryza sativa subsp. indica (Rice).